A 465-amino-acid chain; its full sequence is Cysteine--tRNA ligase (465 aa).

A Zn(2+)-binding site is contributed by Cys27. Positions 29–39 match the 'HIGH' region motif; that stretch reads PTVYDDAHLGH. Zn(2+) contacts are provided by Cys207, His237, and Glu241. The 'KMSKS' region motif lies at 269-273; it reads KMSKS. Lys272 serves as a coordination point for ATP.

This sequence belongs to the class-I aminoacyl-tRNA synthetase family. As to quaternary structure, monomer. Zn(2+) serves as cofactor.

It is found in the cytoplasm. It catalyses the reaction tRNA(Cys) + L-cysteine + ATP = L-cysteinyl-tRNA(Cys) + AMP + diphosphate. In Helicobacter pylori (strain J99 / ATCC 700824) (Campylobacter pylori J99), this protein is Cysteine--tRNA ligase (cysS).